The primary structure comprises 128 residues: Azurin (128 aa).

A Plastocyanin-like domain is found at 1–128 (AECKTTIDST…SMMKGTVTLK (128 aa)). The cysteines at positions 3 and 26 are disulfide-linked. Residues H46, C112, H117, and M121 each coordinate Cu cation.

It is found in the periplasm. Its function is as follows. Transfers electrons from cytochrome c551 to cytochrome oxidase. In Pseudomonas fluorescens biotype B, this protein is Azurin.